Consider the following 403-residue polypeptide: Alkaline protease 1 (403 aa).

An N-terminal signal peptide occupies residues 1–21; the sequence is MQSIKRTLLLLGALLPAALAA. The propeptide occupies 22 to 125; the sequence is PAREPHPSSN…QIWYLDALTT (104 aa). The Inhibitor I9 domain occupies 36–120; it reads KYIITFKSGI…HVEEDQIWYL (85 aa). Residues 130 to 403 form the Peptidase S8 domain; it reads PWGLGSISHK…PNKLAYNGAA (274 aa). Residues Asp162 and His193 each act as charge relay system in the active site. Residues Asn253 and Asn307 are each glycosylated (N-linked (GlcNAc...) asparagine). The active-site Charge relay system is Ser349.

The protein belongs to the peptidase S8 family.

The protein localises to the secreted. It carries out the reaction Hydrolysis of proteins with broad specificity, and of Bz-Arg-OEt &gt; Ac-Tyr-OEt. Does not hydrolyze peptide amides.. Functionally, secreted alkaline protease that allows assimilation of proteinaceous substrates. The sequence is that of Alkaline protease 1 (alp1) from Aspergillus clavatus (strain ATCC 1007 / CBS 513.65 / DSM 816 / NCTC 3887 / NRRL 1 / QM 1276 / 107).